Consider the following 447-residue polypeptide: MQDHGSLPSVLDVHVNVAGRSSVLGKVKSRKARWSVRPSDMSNKTFNPIRAIVDNMKVKPNPNKTMIALSIGDPTVFGNLPTDPEVTQAMKDALDSGKFNGYVPSIGYLSSREEVASYYHCPEAPLEAKDVILTSGCSQAIELCLAVLANPGQNILVPRPGFSLYRTLAESMGIEVKLYNLLPEKNWEIDLKQLESLIDEKTVCLIVNNPSNPCGSVFSRRHLQKILAVAARQCVPILADEIYGDMVFSDSKFEPLATLSSKVPILSCGGLAKRWLVPGWRMGWILIHDRRDIFGNEIRDGLTKLSQRILGPCTLVQGALKSILCRTPRVFYHNTLSFLKSNADLCYGALAAIPGLRPIHPSGAMYLMVGIEMEHFPEFENDVEFTEQLVAEQSVHCLPATCFEYPNFFRVVITVPEVMMLEACSRIQEFCEQHYHCAEGSQEECDK.

N6-(pyridoxal phosphate)lysine is present on Lys273. A Phosphoserine modification is found at Ser441.

The protein belongs to the class-I pyridoxal-phosphate-dependent aminotransferase family. In terms of assembly, homodimer. Pyridoxal 5'-phosphate is required as a cofactor.

The enzyme catalyses L-tyrosine + 2-oxoglutarate = 3-(4-hydroxyphenyl)pyruvate + L-glutamate. It functions in the pathway amino-acid degradation; L-phenylalanine degradation; acetoacetate and fumarate from L-phenylalanine: step 2/6. Its function is as follows. Transaminase involved in tyrosine breakdown. Converts tyrosine to p-hydroxyphenylpyruvate. Can catalyze the reverse reaction, using glutamic acid, with 2-oxoglutarate as cosubstrate (in vitro). Has much lower affinity and transaminase activity for phenylalanine. This chain is Tyrosine aminotransferase (TAT), found in Bos taurus (Bovine).